The following is a 419-amino-acid chain: MNIIDELEWRGAVNQQTDEEGLRKLVEEKKISLYCGVDPTGDSMHIGHLIPFMMMKRFQLAGHHPVILIGGATGTIGDPSGRQSERQLQTLEVVQHNVDALTAQMKKLFDFGGNSEVKMVNNYDWTHEINIIEFLRDYGKNFSINSMLAKDIVASRLDTGISFTEFTYQILQAMDFHHLYTKEDVQLQIGGSDQWGNITSGLDLIRKLEGHEAKVFGLTIPLLLKSDGTKFGKSAGGAVWLDPEKTTPFEFYQFWVNTDDRDVVKYLKYFTFLTKERIDELAVKVETEPHKREAQKVLAEEMTKFVHGEEALLQAVKITAALFSGDIKSLTADEIEQGFKEMPTFQSSKETKNIVEWLVDLGIEPSRRQAREDINNGAISMNGEKVTDVGTDVTVENSFDGRFIIIRKGKKNYSLVKLG.

Tyr-34 provides a ligand contact to L-tyrosine. Residues 39–48 (PTGDSMHIGH) carry the 'HIGH' region motif. Positions 168 and 172 each coordinate L-tyrosine. A 'KMSKS' region motif is present at residues 230-234 (KFGKS). Lys-233 provides a ligand contact to ATP. In terms of domain architecture, S4 RNA-binding spans 352-418 (KNIVEWLVDL…GKKNYSLVKL (67 aa)).

This sequence belongs to the class-I aminoacyl-tRNA synthetase family. TyrS type 1 subfamily. In terms of assembly, homodimer.

The protein localises to the cytoplasm. The catalysed reaction is tRNA(Tyr) + L-tyrosine + ATP = L-tyrosyl-tRNA(Tyr) + AMP + diphosphate + H(+). Catalyzes the attachment of tyrosine to tRNA(Tyr) in a two-step reaction: tyrosine is first activated by ATP to form Tyr-AMP and then transferred to the acceptor end of tRNA(Tyr). This is Tyrosine--tRNA ligase 2 from Bacillus anthracis.